Consider the following 355-residue polypeptide: GTP 3',8-cyclase (355 aa).

In terms of domain architecture, Radical SAM core spans 16 to 242 (RYGRRATDMR…PDPRARDGAP (227 aa)). Arginine 25 lines the GTP pocket. Residues cysteine 32 and cysteine 36 each contribute to the [4Fe-4S] cluster site. Tyrosine 38 contributes to the S-adenosyl-L-methionine binding site. Cysteine 39 is a [4Fe-4S] cluster binding site. Arginine 76 contacts GTP. S-adenosyl-L-methionine is bound at residue glycine 80. A GTP-binding site is contributed by threonine 107. Serine 131 is an S-adenosyl-L-methionine binding site. GTP is bound at residue lysine 168. S-adenosyl-L-methionine is bound at residue methionine 202. [4Fe-4S] cluster-binding residues include cysteine 277 and cysteine 280. A GTP-binding site is contributed by 282-284 (RTR). Cysteine 294 provides a ligand contact to [4Fe-4S] cluster.

It belongs to the radical SAM superfamily. MoaA family. As to quaternary structure, monomer. Requires [4Fe-4S] cluster as cofactor.

It carries out the reaction GTP + AH2 + S-adenosyl-L-methionine = (8S)-3',8-cyclo-7,8-dihydroguanosine 5'-triphosphate + 5'-deoxyadenosine + L-methionine + A + H(+). The protein operates within cofactor biosynthesis; molybdopterin biosynthesis. Its function is as follows. Catalyzes, together with MoaC, the conversion of 5'-GTP to cyclic pyranopterin monophosphate (cPMP or molybdopterin precursor Z). Catalyzes the cyclization of GTP to (8S)-3',8-cyclo-7,8-dihydroguanosine 5'-triphosphate. In Paenarthrobacter nicotinovorans (Arthrobacter nicotinovorans), this protein is GTP 3',8-cyclase.